Reading from the N-terminus, the 486-residue chain is Aspartyl/glutamyl-tRNA(Asn/Gln) amidotransferase subunit B (486 aa).

It belongs to the GatB/GatE family. GatB subfamily. As to quaternary structure, heterotrimer of A, B and C subunits.

The enzyme catalyses L-glutamyl-tRNA(Gln) + L-glutamine + ATP + H2O = L-glutaminyl-tRNA(Gln) + L-glutamate + ADP + phosphate + H(+). It catalyses the reaction L-aspartyl-tRNA(Asn) + L-glutamine + ATP + H2O = L-asparaginyl-tRNA(Asn) + L-glutamate + ADP + phosphate + 2 H(+). Allows the formation of correctly charged Asn-tRNA(Asn) or Gln-tRNA(Gln) through the transamidation of misacylated Asp-tRNA(Asn) or Glu-tRNA(Gln) in organisms which lack either or both of asparaginyl-tRNA or glutaminyl-tRNA synthetases. The reaction takes place in the presence of glutamine and ATP through an activated phospho-Asp-tRNA(Asn) or phospho-Glu-tRNA(Gln). The polypeptide is Aspartyl/glutamyl-tRNA(Asn/Gln) amidotransferase subunit B (Leptospira borgpetersenii serovar Hardjo-bovis (strain JB197)).